The following is a 618-amino-acid chain: Mitochondrial Rho GTPase 1 (618 aa).

At 1 to 592 (MKKDVRILLV…TQADLKSSTF (592 aa)) the chain is on the cytoplasmic side. Positions 2-168 (KKDVRILLVG…FYYAQKAVLH (167 aa)) constitute a Miro 1 domain. 5 residues coordinate GTP: Arg-14, Gly-16, Lys-17, Thr-18, and Ser-19. Thr-18 contributes to the Mg(2+) binding site. 2 residues coordinate Mg(2+): Pro-35 and Asp-57. Ser-59 lines the GTP pocket. An N6-acetyllysine modification is found at Lys-92. 5 residues coordinate GTP: Asn-118, Lys-119, Asp-121, Ala-149, and Lys-150. Lys-153 participates in a covalent cross-link: Glycyl lysine isopeptide (Lys-Gly) (interchain with G-Cter in ubiquitin). Positions 184–219 (ACIKALTRIFKISDQDNDGTLNDAELNFFQRICFNT) constitute an EF-hand 1 domain. Asp-197, Asp-199, Asp-201, Thr-203, and Glu-208 together coordinate Ca(2+). Residue Lys-235 forms a Glycyl lysine isopeptide (Lys-Gly) (interchain with G-Cter in ubiquitin) linkage. An EF-hand 2 domain is found at 304-339 (HAYLFLQSTFDKHDLDRDCALSPDELKDLFKVFPYI). Residues Asp-317, Asp-319, Asp-321, Ala-323, and Glu-328 each coordinate Ca(2+). In terms of domain architecture, Miro 2 spans 416 to 579 (RNVFRCNVIG…FVKLTTMAMY (164 aa)). 7 residues coordinate GTP: Asn-428, Cys-429, Gly-430, Lys-431, Ser-432, Gly-433, and Lys-447. Mg(2+) is bound at residue Asn-428. GDP-binding residues include Asn-428, Cys-429, Gly-430, Lys-431, Ser-432, Gly-433, Lys-447, Lys-454, Ser-477, Glu-478, Lys-528, Asp-530, Thr-558, Cys-559, and Asn-560. GTP is bound by residues Lys-528, Asp-530, Thr-558, and Cys-559. A Glycyl lysine isopeptide (Lys-Gly) (interchain with G-Cter in ubiquitin) cross-link involves residue Lys-572. A helical; Anchor for type IV membrane protein transmembrane segment spans residues 593-615 (WLRASFGATVFAVLGFAMYKALL). Topologically, residues 616–618 (KQR) are mitochondrial intermembrane.

The protein belongs to the mitochondrial Rho GTPase family. Homodimer. Interacts with the kinesin-binding proteins TRAK1/OIP106 and TRAK2/GRIF1, forming a link between mitochondria and the trafficking apparatus of the microtubules. Interacts with RAP1GDS1. Interacts with ARMCX1. Found in a complex with KIF5B, OGT, RHOT2 and TRAK1. Post-translationally, ubiquitinated by PRKN during mitophagy, leading to its degradation and enhancement of mitophagy. Deubiquitinated by USP30. In terms of processing, acetylation on Lys-92 decreases sensitivity of mitochondrial transport to elevated Ca(2+) levels, increases mitochondrial transport and promotes axon growth. Deacetylated by HDAC6 which blocks mitochondrial transport and mediates axon growth inhibition. In terms of tissue distribution, ubiquitously expressed. Expressed at high level in heart and skeletal muscle.

The protein localises to the mitochondrion outer membrane. The enzyme catalyses GTP + H2O = GDP + phosphate + H(+). It catalyses the reaction ATP + H2O = ADP + phosphate + H(+). The catalysed reaction is UTP + H2O = UDP + phosphate + H(+). Atypical mitochondrial nucleoside-triphosphatase (NTPase) involved in mitochondrial trafficking. Probably involved in control of anterograde transport of mitochondria and their subcellular distribution. Promotes mitochondrial fission during high calcium conditions. Can hydrolyze GTP, ATP and UTP. This is Mitochondrial Rho GTPase 1 (RHOT1) from Homo sapiens (Human).